Reading from the N-terminus, the 496-residue chain is Lysosomal Pro-X carboxypeptidase (496 aa).

Positions 1–21 (MGRRALLLLLLSFLAPWTTIA) are cleaved as a signal peptide. Positions 22–45 (LRPALRALGSLHLPTNPTSLPAVA) are excised as a propeptide. Asparagine 47 and asparagine 101 each carry an N-linked (GlcNAc...) asparagine glycan. The active-site Charge relay system is serine 179. Residues 194–334 (HMVVGALAAS…QNIFQALNVY (141 aa)) are SKS domain. 4 disulfide bridges follow: cysteine 215-cysteine 372, cysteine 233-cysteine 310, cysteine 264-cysteine 343, and cysteine 364-cysteine 394. N-linked (GlcNAc...) asparagine glycosylation is found at asparagine 317, asparagine 336, and asparagine 345. Asparagine 415 is a glycosylation site (N-linked (GlcNAc...) asparagine). Active-site charge relay system residues include aspartate 430 and histidine 455.

This sequence belongs to the peptidase S28 family. As to quaternary structure, homodimer.

The protein resides in the lysosome. It catalyses the reaction Cleavage of a -Pro-|-Xaa bond to release a C-terminal amino acid.. Cleaves C-terminal amino acids linked to proline in peptides such as angiotensin II, III and des-Arg9-bradykinin. This cleavage occurs at acidic pH, but enzymatic activity is retained with some substrates at neutral pH. In Pongo abelii (Sumatran orangutan), this protein is Lysosomal Pro-X carboxypeptidase (PRCP).